Here is a 388-residue protein sequence, read N- to C-terminus: Succinate--CoA ligase [ADP-forming] subunit beta (388 aa).

Residues 9 to 244 enclose the ATP-grasp domain; it reads KQLFAEYGLP…PSQEDEREAH (236 aa). Residues lysine 46, 53–55, glutamate 99, threonine 102, and glutamate 107 contribute to the ATP site; that span reads GRG. The Mg(2+) site is built by asparagine 199 and aspartate 213. Residues asparagine 264 and 321 to 323 each bind substrate; that span reads GIV.

Belongs to the succinate/malate CoA ligase beta subunit family. As to quaternary structure, heterotetramer of two alpha and two beta subunits. Mg(2+) serves as cofactor.

The catalysed reaction is succinate + ATP + CoA = succinyl-CoA + ADP + phosphate. It carries out the reaction GTP + succinate + CoA = succinyl-CoA + GDP + phosphate. Its pathway is carbohydrate metabolism; tricarboxylic acid cycle; succinate from succinyl-CoA (ligase route): step 1/1. Its function is as follows. Succinyl-CoA synthetase functions in the citric acid cycle (TCA), coupling the hydrolysis of succinyl-CoA to the synthesis of either ATP or GTP and thus represents the only step of substrate-level phosphorylation in the TCA. The beta subunit provides nucleotide specificity of the enzyme and binds the substrate succinate, while the binding sites for coenzyme A and phosphate are found in the alpha subunit. This chain is Succinate--CoA ligase [ADP-forming] subunit beta, found in Colwellia psychrerythraea (strain 34H / ATCC BAA-681) (Vibrio psychroerythus).